A 427-amino-acid polypeptide reads, in one-letter code: L-rhamnose isomerase (427 aa).

Histidine 264, aspartate 296, and aspartate 298 together coordinate Mn(2+).

It belongs to the rhamnose isomerase family. The cofactor is Mn(2+).

It localises to the cytoplasm. The enzyme catalyses L-rhamnopyranose = L-rhamnulose. The protein operates within carbohydrate degradation; L-rhamnose degradation; glycerone phosphate from L-rhamnose: step 1/3. Catalyzes the interconversion of L-rhamnose and L-rhamnulose. The polypeptide is L-rhamnose isomerase (Rhodopirellula baltica (strain DSM 10527 / NCIMB 13988 / SH1)).